The chain runs to 185 residues: NADH-quinone oxidoreductase subunit B (185 aa).

[4Fe-4S] cluster is bound by residues cysteine 38, cysteine 39, cysteine 104, and cysteine 133. Basic and acidic residues predominate over residues 165–176; that stretch reads AAEAYREEERQA. The disordered stretch occupies residues 165–185; it reads AAEAYREEERQAARSALGPRS.

The protein belongs to the complex I 20 kDa subunit family. NDH-1 is composed of 14 different subunits. Subunits NuoB, C, D, E, F, and G constitute the peripheral sector of the complex. The cofactor is [4Fe-4S] cluster.

Its subcellular location is the cell membrane. It catalyses the reaction a quinone + NADH + 5 H(+)(in) = a quinol + NAD(+) + 4 H(+)(out). In terms of biological role, NDH-1 shuttles electrons from NADH, via FMN and iron-sulfur (Fe-S) centers, to quinones in the respiratory chain. The immediate electron acceptor for the enzyme in this species is believed to be ubiquinone. Couples the redox reaction to proton translocation (for every two electrons transferred, four hydrogen ions are translocated across the cytoplasmic membrane), and thus conserves the redox energy in a proton gradient. The chain is NADH-quinone oxidoreductase subunit B from Thermomicrobium roseum (strain ATCC 27502 / DSM 5159 / P-2).